Consider the following 853-residue polypeptide: DNA mismatch repair protein MutS (853 aa).

614–621 contributes to the ATP binding site; that stretch reads GPNMGGKS.

Belongs to the DNA mismatch repair MutS family.

Functionally, this protein is involved in the repair of mismatches in DNA. It is possible that it carries out the mismatch recognition step. This protein has a weak ATPase activity. The chain is DNA mismatch repair protein MutS from Enterobacter sp. (strain 638).